We begin with the raw amino-acid sequence, 224 residues long: MNILIFGPPGSGKSTHSRTITERYGLTYISSGDMIRAEIEKGSELGKELKKYLAKGELIPDIVVNTLVISRLRRDRNNFIIDGYPRTAEQVLALENYLYDHGIRIDVAMEIFISKEESVERISGRRICPKCGAVYHLRYRPPKVPGKCDLCGSQLIQREDDRSEIVAKRYDLYVKNMEPIIKFYKKQGIYVRVDGHGSINEVWERIRPLLDYIHNREKKRKENE.

Position 10–15 (10–15 (GSGKST)) interacts with ATP. Residues 30–59 (SSGDMIRAEIEKGSELGKELKKYLAKGELI) form an NMP region. AMP is bound by residues Ser-31, Arg-36, 57-59 (ELI), 83-86 (GYPR), and Gln-90. The tract at residues 124–161 (GRRICPKCGAVYHLRYRPPKVPGKCDLCGSQLIQREDD) is LID. Arg-125 is a binding site for ATP. Residues Cys-128 and Cys-131 each contribute to the Zn(2+) site. Residue 134–135 (VY) coordinates ATP. Zn(2+) contacts are provided by Cys-148 and Cys-151. Arg-158 and Arg-169 together coordinate AMP. Residue Gly-197 participates in ATP binding.

Belongs to the adenylate kinase family. In terms of assembly, monomer.

The protein localises to the cytoplasm. It catalyses the reaction AMP + ATP = 2 ADP. It participates in purine metabolism; AMP biosynthesis via salvage pathway; AMP from ADP: step 1/1. Its function is as follows. Catalyzes the reversible transfer of the terminal phosphate group between ATP and AMP. Plays an important role in cellular energy homeostasis and in adenine nucleotide metabolism. In Thermococcus onnurineus (strain NA1), this protein is Adenylate kinase.